The following is a 339-amino-acid chain: Anthranilate phosphoribosyltransferase (339 aa).

5-phospho-alpha-D-ribose 1-diphosphate-binding positions include Gly81, Gly84–Asp85, Thr89, Asn91–Thr94, Lys109–Ser117, and Ala121. Residue Gly81 participates in anthranilate binding. Residue Ser93 participates in Mg(2+) binding. Asn112 is an anthranilate binding site. Arg167 serves as a coordination point for anthranilate. Mg(2+) is bound by residues Asp226 and Glu227.

This sequence belongs to the anthranilate phosphoribosyltransferase family. Homodimer. Mg(2+) is required as a cofactor.

It carries out the reaction N-(5-phospho-beta-D-ribosyl)anthranilate + diphosphate = 5-phospho-alpha-D-ribose 1-diphosphate + anthranilate. It functions in the pathway amino-acid biosynthesis; L-tryptophan biosynthesis; L-tryptophan from chorismate: step 2/5. In terms of biological role, catalyzes the transfer of the phosphoribosyl group of 5-phosphorylribose-1-pyrophosphate (PRPP) to anthranilate to yield N-(5'-phosphoribosyl)-anthranilate (PRA). This Roseobacter denitrificans (strain ATCC 33942 / OCh 114) (Erythrobacter sp. (strain OCh 114)) protein is Anthranilate phosphoribosyltransferase.